Here is a 227-residue protein sequence, read N- to C-terminus: Orotidine 5'-phosphate decarboxylase (227 aa).

Residues Asp8, Lys30, 59–68 (DLKLYDIPYT), Thr118, Arg178, Gln187, Gly207, and Arg208 contribute to the substrate site. The active-site Proton donor is Lys61.

It belongs to the OMP decarboxylase family. Type 1 subfamily. Homodimer.

The enzyme catalyses orotidine 5'-phosphate + H(+) = UMP + CO2. It participates in pyrimidine metabolism; UMP biosynthesis via de novo pathway; UMP from orotate: step 2/2. Its function is as follows. Catalyzes the decarboxylation of orotidine 5'-monophosphate (OMP) to uridine 5'-monophosphate (UMP). This Helicobacter pylori (strain J99 / ATCC 700824) (Campylobacter pylori J99) protein is Orotidine 5'-phosphate decarboxylase.